The sequence spans 239 residues: 1-(5-phosphoribosyl)-5-[(5-phosphoribosylamino)methylideneamino] imidazole-4-carboxamide isomerase (239 aa).

Asp-8 serves as the catalytic Proton acceptor. Residue Asp-129 is the Proton donor of the active site.

It belongs to the HisA/HisF family.

It localises to the cytoplasm. The enzyme catalyses 1-(5-phospho-beta-D-ribosyl)-5-[(5-phospho-beta-D-ribosylamino)methylideneamino]imidazole-4-carboxamide = 5-[(5-phospho-1-deoxy-D-ribulos-1-ylimino)methylamino]-1-(5-phospho-beta-D-ribosyl)imidazole-4-carboxamide. It participates in amino-acid biosynthesis; L-histidine biosynthesis; L-histidine from 5-phospho-alpha-D-ribose 1-diphosphate: step 4/9. This chain is 1-(5-phosphoribosyl)-5-[(5-phosphoribosylamino)methylideneamino] imidazole-4-carboxamide isomerase, found in Bacillus cereus (strain B4264).